The sequence spans 184 residues: Ribose 1,5-bisphosphate phosphokinase PhnN (184 aa).

11-18 (GPSGAGKD) contacts ATP.

The protein belongs to the ribose 1,5-bisphosphokinase family.

The catalysed reaction is alpha-D-ribose 1,5-bisphosphate + ATP = 5-phospho-alpha-D-ribose 1-diphosphate + ADP. Its pathway is metabolic intermediate biosynthesis; 5-phospho-alpha-D-ribose 1-diphosphate biosynthesis; 5-phospho-alpha-D-ribose 1-diphosphate from D-ribose 5-phosphate (route II): step 3/3. Functionally, catalyzes the phosphorylation of ribose 1,5-bisphosphate to 5-phospho-D-ribosyl alpha-1-diphosphate (PRPP). The chain is Ribose 1,5-bisphosphate phosphokinase PhnN from Burkholderia pseudomallei (strain K96243).